Reading from the N-terminus, the 348-residue chain is S-adenosyl-L-methionine-dependent methyl transferase PigF (348 aa).

Glu-199 contributes to the S-adenosyl-L-methionine binding site. His-247 functions as the Proton acceptor in the catalytic mechanism.

It belongs to the class I-like SAM-binding methyltransferase superfamily. Cation-independent O-methyltransferase family.

It participates in antibiotic biosynthesis; prodigiosin biosynthesis. In terms of biological role, involved in the biosynthesis of 4-methoxy-2,2'-bipyrrole-5-carbaldehyde (MBC), one of the terminal products involved in the biosynthesis of the red antibiotic prodigiosin (Pig). Catalyzes the transfer of a methyl group from S-adenosyl-L-methionine (SAM) to the hydroxyl group of 4-hydroxy-2,2'-bipyrrole-5-carbaldehyde (HBC) to yield 4-methoxy-2,2'-bipyrrole-5-carbaldehyde (MBC). This is S-adenosyl-L-methionine-dependent methyl transferase PigF from Serratia sp. (strain ATCC 39006) (Prodigiosinella confusarubida).